The chain runs to 641 residues: Epithelial sodium channel subunit beta (641 aa).

The Cytoplasmic portion of the chain corresponds to 1-50 (MHVKKYLLKCLHRLQKGPGYTYKELLVWYCDNTNTHGPKRIIREGPKKKA). The chain crosses the membrane as a helical span at residues 51-71 (MWFLITLLFASLVCWQWGVFI). At 72-533 (KTYLSWEVSV…GGQFGFWMGG (462 aa)) the chain is on the extracellular side. Disulfide bonds link cysteine 98-cysteine 273, cysteine 185-cysteine 190, cysteine 197-cysteine 204, cysteine 250-cysteine 257, cysteine 362-cysteine 449, cysteine 387-cysteine 445, cysteine 391-cysteine 441, cysteine 400-cysteine 427, and cysteine 402-cysteine 416. Residue asparagine 141 is glycosylated (N-linked (GlcNAc...) asparagine). 2 N-linked (GlcNAc...) asparagine glycosylation sites follow: asparagine 261 and asparagine 379. Residues 534 to 554 (SVLCLIEFAEIIIDFVWITII) form a helical membrane-spanning segment. Residues 555–641 (KLVALAKGLR…VESDSEGDAV (87 aa)) are Cytoplasmic-facing. A disordered region spans residues 596 to 641 (GHRSPDAEAYPDEQALPIPGTPPPNYDSLRLQPLDVVESDSEGDAV). Residues 617–621 (PPPNY) carry the PY motif; recruits WW domain-containing proteins and is thereby required for ubiquitination and inhibition of the channel by NEDD4 and NEDD4L motif. Residues 632–641 (VESDSEGDAV) are compositionally biased toward acidic residues. Phosphoserine is present on residues serine 634 and serine 636.

It belongs to the amiloride-sensitive sodium channel (TC 1.A.6) family. SCNN1B subfamily. Component of the heterotrimeric epithelial sodium channel (ENaC) composed of an alpha/SCNN1A, a beta/SCNN1B and a gamma/SCNN1G subunit. Interacts with WWP1 (via WW domains). Interacts with WWP2 (via WW domains); inhibits the channel. Interacts with the full-length immature form of PCSK9 (pro-PCSK9). Interacts (N-glycosylated) with BPIFA1; the interaction is direct and inhibits the proteolytic processing of SCNN1A and SCNN1G and the activation of ENaC. Ubiquitinated. Can be ubiquitinated at multiple sites and undergo monoubiquitination and polyubiquitination. Ubiquitination by NEDD4 or NEDD4L inhibits the ENaC channel through endocytosis, intracellular retention and degradation of its individual subunits. However, some studies could not confirm the ubiquitination of this subunit of the ENaC. Post-translationally, phosphorylated on serine and threonine residues. Aldosterone and insulin increase the basal level of phosphorylation. In terms of processing, N-glycosylated. N-glycosylation is required for interaction with BPIFA1.

The protein localises to the apical cell membrane. Its subcellular location is the cytoplasmic vesicle membrane. It carries out the reaction Na(+)(in) = Na(+)(out). Originally identified and characterized by its inhibition by the diuretic drug amiloride. This is one of the three pore-forming subunits of the heterotrimeric epithelial sodium channel (ENaC), a critical regulator of sodium balance and fluid homeostasis. ENaC operates in epithelial tissues, where it mediates the electrodiffusion of sodium ions from extracellular fluid through the apical membrane of cells, with water following osmotically. It plays a key role in maintaining sodium homeostasis through electrogenic sodium reabsorption in the kidneys. Additionally, ENaC is essential for airway surface liquid homeostasis, which is crucial for proper mucus clearance. This Oryctolagus cuniculus (Rabbit) protein is Epithelial sodium channel subunit beta.